Reading from the N-terminus, the 801-residue chain is Glycerol-3-phosphate acyltransferase 2, mitochondrial (801 aa).

The disordered stretch occupies residues 1–24; it reads METMLKSNPQMQQRNNHSGQETSL. Residues 1–305 are Cytoplasmic-facing; it reads METMLKSNPQ…PGPRLSALGQ (305 aa). Residues 180–290 form an acyltransferase region; it reads QLHKGQMKMV…SGQPLLIFLE (111 aa). The short motif at 205–210 is the HXXXXD motif element; it reads HKSLLD. Residues 306–332 form a helical membrane-spanning segment; sequence AWLGLVVQAVQAGIVPDATLVPVATAY. Residues 333-449 lie on the Mitochondrial intermembrane side of the membrane; that stretch reads DLVPDAPCNM…QLLVRRLSRH (117 aa). The chain crosses the membrane as a helical span at residues 450–472; sequence VLSASVASSAVMSTAIMATLLLL. Residues 473–795 are Cytoplasmic-facing; that stretch reads KHQKGVVLSQ…DNQDKLEQFI (323 aa).

Belongs to the GPAT/DAPAT family. In terms of assembly, interacts with PIWIL2. In terms of tissue distribution, expressed in spermatocytes and spermatides.

The protein localises to the mitochondrion outer membrane. It carries out the reaction sn-glycerol 3-phosphate + an acyl-CoA = a 1-acyl-sn-glycero-3-phosphate + CoA. The catalysed reaction is a 1-acyl-sn-glycero-3-phosphate + an acyl-CoA = a 1,2-diacyl-sn-glycero-3-phosphate + CoA. It catalyses the reaction 1-(9Z-octadecenoyl)-sn-glycero-3-phosphate + (9Z)-octadecenoyl-CoA = 1,2-di-(9Z-octadecenoyl)-sn-glycero-3-phosphate + CoA. The enzyme catalyses 1-(9Z-octadecenoyl)-sn-glycero-3-phosphate + (5Z,8Z,11Z,14Z)-eicosatetraenoyl-CoA = 1-(9Z)-octadecenoyl-2-(5Z,8Z,11Z,14Z)-eicosatetraenoyl-sn-glycero-3-phosphate + CoA. It carries out the reaction (5Z,8Z,11Z,14Z)-eicosatetraenoyl-CoA + sn-glycerol 3-phosphate = 1-(5Z,8Z,11Z,14Z-eicosatetraenoyl)-sn-glycero-3-phosphate + CoA. Its pathway is phospholipid metabolism; CDP-diacylglycerol biosynthesis; CDP-diacylglycerol from sn-glycerol 3-phosphate: step 1/3. Inhibited by N-ethylmaleimide (NEM). In terms of biological role, transfers an acyl-group from acyl-ACP to the sn-1 position of glycerol-3-phosphate producing a lysophosphatidic acid (LPA), an essential step for the triacylglycerol (TAG) and glycerophospholipids. In vitro also transfers an acyl-group from acyl-ACP to the LPA producing a phosphatidic acid (PA). Prefers arachidonoyl-CoA as the acyl donor. Required for primary processing step during piRNA biosynthesis. Molecular mechanisms by which it promotes piRNA biosynthesis are unclear and do not involve its acyltransferase activity. The protein is Glycerol-3-phosphate acyltransferase 2, mitochondrial of Rattus norvegicus (Rat).